Reading from the N-terminus, the 984-residue chain is MVPQKRSRDDLNGLKSPVRSPKKIAMPAATSASNGVVAGWHSTIEKVVKSVVSIQFAQVASFDCESAVVSEATGFVVDTEMGIIMTNRHVVGAGPFCGYAVFDNHEECELVPIYRDPVHDFGFLKFDPSKIKYMNVQKLRLCPEKAQVGTEIRVVGNDNGEKLSILSGFISRLDRNAPDYGDLTYNDFNTEYIQAAASASGGSSGSPVVDIDGDAIALQAGGSTDASTDFFLPLNRGKRALECILRGDKVTRGTIQTHWMLKPFDECRRLGLSASNEKKQRELFPSTIGMLVAETVLPEGPSAVAATEGDILLSVNSTPISSFITLDSILDEAVGDIVKVTVERNGAEITFDIYVQDLHSITPDRYVEVCGASFQDLSYQLARIYAIPVRGVYVSEVGGSFRLDGQGNESKGWVVDSIDDIDTPDLDTFIKVIAAIPDGRRVSIRYRHLRDLHTTNFTITYIDRKWHSSFRLAVRNDTTGKWDFTDLSKQYPVPKKDEIVPQRATFTDPNLEEADAACAPLSRSFVRVSCMIPYKIDGFPRTMRQSHGLVVDAEKGLVLVSRSIIPYDLCNVSVTFAESVVVPGTVVFMHPLQNYAILQYDPKLVHADIETAKLSSTPLKQGDPVLFMGHNLSLRLVTTRTKVSDVTAITIPPNAGEPYYRALNLDAITVDSTIPNGCTAGVLADPKTGVVRAFWLSCMGERTEGRQHEYRLGIDTSTFLETVQRIRAGKPPQERFLDVEIASVSMIQARIRGVSPEWIAAVEQDNSQRHQLFEVIRTATPINGNSQALKEGDILLSINGKLLTTLTTLSEAGDKEQVTIKLVRNKKEEEIQAPTTDSAFETSQAVFWCGAVLQTPHHAVRQQIKKIHSGVYVSSRAQGSPAYQYLIAPTNFITHVNGTATPDLETFLSVVTKIPDNTYVKLRIVTFDNVAFACSMKMNYHYFPTAEIKKEGNEWVGYSYKDGKRVKESDENVEEQVNEAEKQE.

A serine protease region spans residues 51–241 (VVSIQFAQVA…LPLNRGKRAL (191 aa)). Active-site charge relay system residues include H89, D120, and S203. 2 consecutive PDZ domains span residues 268 to 346 (RRLG…ERNG) and 756 to 826 (PEWI…VRNK).

It belongs to the peptidase S1C family.

The protein resides in the nucleus. Its function is as follows. Nuclear serine protease which mediates apoptosis. This is Pro-apoptotic serine protease NMA111 (NMA111) from Yarrowia lipolytica (strain CLIB 122 / E 150) (Yeast).